The following is a 442-amino-acid chain: GPI mannosyltransferase 1 (442 aa).

8 helical membrane passes run 22–42 (INLT…LIVF), 95–115 (ILIH…IIAY), 177–197 (LASI…IYSI), 242–262 (AFTF…IFLF), 307–327 (MIVA…ITLV), 336–356 (LLLE…QYFI), 361–381 (ILPL…ILFA), and 408–428 (IWVA…KLIL).

This sequence belongs to the PIGM family.

The protein resides in the endoplasmic reticulum membrane. The protein operates within glycolipid biosynthesis; glycosylphosphatidylinositol-anchor biosynthesis. Its function is as follows. Mannosyltransferase involved in glycosylphosphatidylinositol-anchor biosynthesis. Transfers the first alpha-1,4-mannose to GlcN-acyl-PI during GPI precursor assembly. In Dictyostelium discoideum (Social amoeba), this protein is GPI mannosyltransferase 1 (pigm).